Here is a 373-residue protein sequence, read N- to C-terminus: Protein translocase subunit SecF (373 aa).

6 helical membrane passes run 26–46, 142–162, 166–186, 193–213, 251–271, and 280–300; these read IWYGISILITITAIVGLAVRG, WQGLGIFMVLVVIYLAIAFEW, LAAFVALIHDITITVGIYALV, GTVIGLLTILGYSLYDTVVVF, VVALLPVAGLLFIGGGVLGAG, and LFVGLAAGAYSSIFIATPLVA. Low complexity predominate over residues 322–332; the sequence is QGAAKGESAES. The interval 322–373 is disordered; sequence QGAAKGESAESAADEGAYDADEPDDAAPAVVGPRNQPASRGRGRGRPSGKRR. Positions 333–346 are enriched in acidic residues; it reads AADEGAYDADEPDD. Residues 362 to 373 are compositionally biased toward basic residues; it reads GRGRGRPSGKRR.

It belongs to the SecD/SecF family. SecF subfamily. As to quaternary structure, forms a complex with SecD. Part of the essential Sec protein translocation apparatus which comprises SecA, SecYEG and auxiliary proteins SecDF. Other proteins may also be involved.

It localises to the cell membrane. Its function is as follows. Part of the Sec protein translocase complex. Interacts with the SecYEG preprotein conducting channel. SecDF uses the proton motive force (PMF) to complete protein translocation after the ATP-dependent function of SecA. In Streptomyces coelicolor (strain ATCC BAA-471 / A3(2) / M145), this protein is Protein translocase subunit SecF.